Reading from the N-terminus, the 296-residue chain is Acetyl-coenzyme A carboxylase carboxyl transferase subunit beta (296 aa).

In terms of domain architecture, CoA carboxyltransferase N-terminal spans 25–294; sequence VWTKCTSCEQ…PFVEPELISE (270 aa). The Zn(2+) site is built by Cys29, Cys32, Cys48, and Cys51. A C4-type zinc finger spans residues 29–51; it reads CTSCEQVLYSEELKRNLYVCPKC.

Belongs to the AccD/PCCB family. Acetyl-CoA carboxylase is a heterohexamer composed of biotin carboxyl carrier protein (AccB), biotin carboxylase (AccC) and two subunits each of ACCase subunit alpha (AccA) and ACCase subunit beta (AccD). Zn(2+) is required as a cofactor.

The protein localises to the cytoplasm. The catalysed reaction is N(6)-carboxybiotinyl-L-lysyl-[protein] + acetyl-CoA = N(6)-biotinyl-L-lysyl-[protein] + malonyl-CoA. The protein operates within lipid metabolism; malonyl-CoA biosynthesis; malonyl-CoA from acetyl-CoA: step 1/1. Component of the acetyl coenzyme A carboxylase (ACC) complex. Biotin carboxylase (BC) catalyzes the carboxylation of biotin on its carrier protein (BCCP) and then the CO(2) group is transferred by the transcarboxylase to acetyl-CoA to form malonyl-CoA. In Haemophilus influenzae (strain PittEE), this protein is Acetyl-coenzyme A carboxylase carboxyl transferase subunit beta.